The primary structure comprises 711 residues: Hydroperoxide isomerase ALOXE3 (711 aa).

Residues 2-119 enclose the PLAT domain; sequence AVYRLCVTTG…TVELRPGTAR (118 aa). The 592-residue stretch at 120–711 folds into the Lipoxygenase domain; the sequence is TICQDSLPLL…PPLIENSVSI (592 aa). Residues H408, H413, H588, N592, and I711 each contribute to the Fe cation site.

Belongs to the lipoxygenase family. Fe cation serves as cofactor. As to expression, predominantly expressed in skin.

The protein localises to the cytoplasm. The catalysed reaction is a hydroperoxyeicosatetraenoate = a hydroxy-epoxy-eicosatetraenoate. It carries out the reaction (12R)-hydroperoxy-(5Z,8Z,10E,14Z)-eicosatetraenoate = (8R)-hydroxy-(11R,12R)-epoxy-(5Z,9E,14Z)-eicosatrienoate. The enzyme catalyses (12S)-hydroperoxy-(5Z,8Z,10E,14Z)-eicosatetraenoate = (8R)-hydroxy-(11S,12S)-epoxy-(5Z,9E,14Z)-eicosatrienoate. It catalyses the reaction (12S)-hydroperoxy-(5Z,8Z,10E,14Z)-eicosatetraenoate = (10R)-hydroxy-(11S,12S)-epoxy-(5Z,8Z,14Z)-eicosatrienoate. The catalysed reaction is (15S)-hydroperoxy-(5Z,8Z,11Z,13E)-eicosatetraenoate = (13R)-hydroxy-(14S,15S)-epoxy-(5Z,8Z,11Z)-eicosatrienoate. It carries out the reaction (5S)-hydroperoxy-(6E,8Z,11Z,14Z)-eicosatetraenoate = 7R-hydroxy-5S,6S-epoxy-(8Z,11Z,14Z)-eicosatrienoate. The enzyme catalyses (13S)-hydroperoxy-(9Z,11E)-octadecadienoate = 11-hydroxy-(12S,13S)-epoxy-(9Z)-octadecenoate. It catalyses the reaction N-[omega-(9R)-hydroperoxy-(10E,12Z)-octadecadienoyloxy]acyl-beta-D-glucosyl-(1&lt;-&gt;1)-octadecasphing-4E-enine = a N-[omega-(9R,10R)-epoxy-(13R)-hydroxy-(11E)-octadecenoyloxy]acyl-beta-D-glucosyl-(1&lt;-&gt;1)-sphing-4E-enine. The catalysed reaction is a N-[omega-(9R)-hydroperoxy-(10E,12Z)-octadecadienoyloxy]-acylsphin-4E-enine = a N-[omega-(9R,10R)-epoxy-(13R)-hydroxy-(11E)-octadecenoyloxy]-acylsphing-4E-enine. It carries out the reaction a hydroperoxyeicosatetraenoate = an oxoeicosatetraenoate + H2O. The enzyme catalyses (12R)-hydroperoxy-(5Z,8Z,10E,14Z)-eicosatetraenoate = 12-oxo-(5Z,8Z,10E,14Z)-eicosatetraenoate + H2O. It catalyses the reaction (12S)-hydroperoxy-(5Z,8Z,10E,14Z)-eicosatetraenoate = 12-oxo-(5Z,8Z,10E,14Z)-eicosatetraenoate + H2O. The catalysed reaction is (15S)-hydroperoxy-(5Z,8Z,11Z,13E)-eicosatetraenoate = 15-oxo-(5Z,8Z,11Z,13E)-eicosatetraenoate + H2O. It carries out the reaction (13S)-hydroperoxy-(9Z,11E)-octadecadienoate = 13-oxo-(9Z,11E)-octadecadienoate + H2O. The enzyme catalyses (8S)-hydroperoxy-(5Z,9E,11Z,14Z)-eicosatetraenoate = (10R)-hydroxy-(8S,9S)-epoxy-(5Z,11Z,14Z)-eicosatrienoate. It catalyses the reaction (8R)-hydroperoxy-(5Z,9E,11Z,14Z)-eicosatetraenoate = 8-oxo-(5Z,9E,11Z,14Z)-eicosatetraenoate + H2O. The catalysed reaction is (8S)-hydroperoxy-(5Z,9E,11Z,14Z)-eicosatetraenoate = 8-oxo-(5Z,9E,11Z,14Z)-eicosatetraenoate + H2O. It functions in the pathway lipid metabolism; hydroperoxy eicosatetraenoic acid biosynthesis. It participates in lipid metabolism; sphingolipid metabolism. With respect to regulation, lipoxygenase activity is activated by 13(S)-HPODE leading to an active free ferric enzyme. The lipoxygenase and hydroperoxide isomerase activities are in competition and are reciprocally regulated by oxygen. The oxygen reacts with an epoxyallylic radical intermediate leading to an epoxyallylic peroxyl radical, which, due to its limited reactivity within the enzyme active site, it dissociates and leaves the enzyme in the activated free ferric state. Its function is as follows. Non-heme iron-containing lipoxygenase which is atypical in that it displays a prominent hydroperoxide isomerase activity and a reduced lipoxygenases activity. The hydroperoxide isomerase activity catalyzes the isomerization of hydroperoxides, derived from arachidonic and linoleic acid by ALOX12B, into hepoxilin-type epoxyalcohols and ketones. In presence of oxygen, oxygenates polyunsaturated fatty acids, including arachidonic acid, to produce fatty acid hydroperoxides. In the skin, acts downstream of ALOX12B on the linoleate moiety of esterified omega-hydroxyacyl-sphingosine (EOS) ceramides to produce an epoxy-ketone derivative, a crucial step in the conjugation of omega-hydroxyceramide to membrane proteins. Therefore plays a crucial role in the synthesis of corneocytes lipid envelope and the establishment of the skin barrier to water loss. In parallel, it may have a signaling function in barrier formation through the production of hepoxilins metabolites. Also plays a role in adipocyte differentiation through hepoxilin A3 and hepoxilin B3 production which in turn activate PPARG. Through the production of hepoxilins in the spinal cord, it may regulate inflammatory tactile allodynia. This is Hydroperoxide isomerase ALOXE3 from Homo sapiens (Human).